A 341-amino-acid chain; its full sequence is Aspartate--ammonia ligase (341 aa).

The protein belongs to the class-II aminoacyl-tRNA synthetase family. AsnA subfamily.

Its subcellular location is the cytoplasm. The catalysed reaction is L-aspartate + NH4(+) + ATP = L-asparagine + AMP + diphosphate + H(+). Its pathway is amino-acid biosynthesis; L-asparagine biosynthesis; L-asparagine from L-aspartate (ammonia route): step 1/1. In Clostridium tetani (strain Massachusetts / E88), this protein is Aspartate--ammonia ligase.